The chain runs to 256 residues: Cilia- and flagella-associated protein 410 (256 aa).

3 LRR repeats span residues 19-40 (SVRKLNCWGSRLTDISICQEMP), 41-62 (SLEVITLSVNSISTLEPVSRCQ), and 63-84 (RLSELYLRRNRIPSLAELFYLK). The LRRCT domain maps to 97–137 (NPCCGTSPHRYRMTVLRTLPRLQKLDNQAVTEEELSRALSE). Disordered stretches follow at residues 129-156 (EELSRALSEGEEITAAPEREGTGHGGPK) and 168-212 (AETG…SSHR). 2 positions are modified to phosphoserine: serine 136 and serine 177.

In terms of assembly, found in a complex with CFAP410, NEK1 and SPATA7. Interacts with NEK1. In terms of tissue distribution, widely expressed. Expressed in the retina.

The protein resides in the mitochondrion. Its subcellular location is the cytoplasm. The protein localises to the cytoskeleton. It is found in the cilium basal body. It localises to the cell projection. The protein resides in the cilium. Its subcellular location is the photoreceptor outer segment. Plays a role in cilia formation and/or maintenance. Plays a role in the regulation of cell morphology and cytoskeletal organization. Involved in DNA damage repair. The polypeptide is Cilia- and flagella-associated protein 410 (Homo sapiens (Human)).